The following is a 244-amino-acid chain: MHVPASLQQSSSSSSSCTEEENKHHMGIDVIIKVTKQDQTPTNDKICQSVTEITESESDPDPEVESEDDSTSVEDVDPPTTYYSIIGGGLRMNFGFTKCPQIKSISESADGNTVNARLSSVSPGQGKDSPAITREEALAMIKDCEVSIDIRCSEEEKDSDIKTHPVLGSNISHKKVSYEDIIGSTIVDTKCVKNLEFSVRIGDMCKESSELEVKDGFKYVDGSASEGATDDTSLIDSTKLKACV.

A disordered region spans residues 1–79 (MHVPASLQQS…STSVEDVDPP (79 aa)). Residues 37 to 53 (QDQTPTNDKICQSVTEI) show a composition bias toward polar residues. Residues 54 to 77 (TESESDPDPEVESEDDSTSVEDVD) show a composition bias toward acidic residues.

It belongs to the orthopoxvirus OPG001 family.

The protein localises to the host cytoplasm. In terms of biological role, the protein is truncated in this vaccinal strain and presumably inactive, because the lack of signal peptide prevents the protein of being secreted. In the other strains inhibits host immune defense by binding to host chemokines. Binds host CC chemokines (beta chemokines) such as RANTES with high affinity, but not CXC or C chemokines (alpha and gamma chemokines). The sequence is that of Inactive chemokine-binding protein (OPG001) from Vaccinia virus (strain Copenhagen) (VACV).